Reading from the N-terminus, the 154-residue chain is Superoxide dismutase [Cu-Zn] (154 aa).

Cu cation is bound by residues H47, H49, and H64. The cysteines at positions 58 and 147 are disulfide-linked. Zn(2+)-binding residues include H64, H72, H81, and D84. Residue H121 coordinates Cu cation.

It belongs to the Cu-Zn superoxide dismutase family. As to quaternary structure, homodimer. The cofactor is Cu cation. Requires Zn(2+) as cofactor.

The protein resides in the cytoplasm. It carries out the reaction 2 superoxide + 2 H(+) = H2O2 + O2. Its function is as follows. Destroys radicals which are normally produced within the cells and which are toxic to biological systems. The sequence is that of Superoxide dismutase [Cu-Zn] (SODCC) from Pinus sylvestris (Scotch pine).